The sequence spans 218 residues: Embryonic polyadenylate-binding protein 2-A (218 aa).

The segment covering 1–16 has biased composition (basic and acidic residues); it reads MSERVSEEPGLDKGDG. 2 disordered regions span residues 1-26 and 169-218; these read MSERVSEEPGLDKGDGAEECELDDPE and RTNM…NHPY. One can recognise an RRM domain in the interval 93–170; that stretch reads RSVYVGNVDY…RTIKVLPKRT (78 aa). Over residues 205 to 218 the composition is skewed to low complexity; it reads FRGCGRPGPLNHPY.

The protein resides in the cytoplasm. Functionally, binds the poly(A) tail of mRNA. Unable to interact with the cap-binding complex and is therefore unlikely to be involved in translation initiation. In Xenopus laevis (African clawed frog), this protein is Embryonic polyadenylate-binding protein 2-A (Pabpn1l-a).